The chain runs to 299 residues: Small ribosomal subunit protein uS3 (299 aa).

In terms of domain architecture, KH type-2 spans Val39 to Arg107. Residues Pro214–Glu299 are disordered. Residues Lys217–Ala248 show a composition bias toward basic and acidic residues. A compositionally biased stretch (low complexity) spans Ala257 to Ala282.

This sequence belongs to the universal ribosomal protein uS3 family. Part of the 30S ribosomal subunit. Forms a tight complex with proteins S10 and S14.

In terms of biological role, binds the lower part of the 30S subunit head. Binds mRNA in the 70S ribosome, positioning it for translation. The protein is Small ribosomal subunit protein uS3 of Methylibium petroleiphilum (strain ATCC BAA-1232 / LMG 22953 / PM1).